Here is a 753-residue protein sequence, read N- to C-terminus: MGASATNSVTHPAFTLNVRPDNIGIITIDVVGDKVNTLKAEFADQIATILQQAHALPKLQGLVIVSGKPDSFIAGADITMIAACRTAHDARVLAQKGQSILAQIAAFPVPVVAAIHGACLGGGLELALACHSRICSLDDKTVLGLPEVQLGLLPGSGGTQRLPRLVGVSKALDMILTGKQIRPRQALKMGLVDDVVPRDILLDVAIQRAKAGWLNRRALPWQERLLSGPLGKALLFRIVRKKTLAKTRGHYPAAERIIDVVRKGLDQGGPSGYEAEARAFGELAMSPQSAALRSLFFATTSLKKETGSAATARAIHRVGVLGGGLMGGGIANVTATRAGLPVRIKDINPQGINQALKYTWDALGKRVRSKRMRPTEQQRQMMLISGSTDYRGFERVDIVVEAVFEDLSLKQQMVADIERFGAAHTIFASNTSSLPISQIAALAQRPEQVIGLHYFSPVDKMPLVEVIPHEKTSEETIATTVALARKQGKTAIVVADRAGFYVNRILAPYINEAARCLLDGEPIESVDNALVDFGFPVGPMMLLDEVGIDVATKIMPILVEQLGPRFAAPPSFDVILKDGRKGRKNGRGFYLYSNPTLHSNSTKNSSPTKNGNSPAKRNSFKWRKNKVKPVDSSIYTLLGVTPKAHLGAGVITQRCTMLMLNEAVRCLDESIIRNPRDGDIGAVFGIGFPPFLGGPFRYLDSLGADKVVQALRLLVQQYGERFEPCQRLVTMAEQQQQFYPVDANIDEVTDVAS.

The tract at residues 8-197 (SVTHPAFTLN…KMGLVDDVVP (190 aa)) is enoyl-CoA hydratase. Residues 313–747 (RAIHRVGVLG…FYPVDANIDE (435 aa)) are 3-hydroxyacyl-CoA dehydrogenase. The tract at residues 593 to 622 (SNPTLHSNSTKNSSPTKNGNSPAKRNSFKW) is disordered. Residues 599–614 (SNSTKNSSPTKNGNSP) show a composition bias toward low complexity.

It in the N-terminal section; belongs to the enoyl-CoA hydratase/isomerase family. The protein in the central section; belongs to the 3-hydroxyacyl-CoA dehydrogenase family. As to quaternary structure, heterotetramer of two alpha chains (FadJ) and two beta chains (FadI).

The protein localises to the cytoplasm. The catalysed reaction is a (3S)-3-hydroxyacyl-CoA = a (2E)-enoyl-CoA + H2O. The enzyme catalyses a 4-saturated-(3S)-3-hydroxyacyl-CoA = a (3E)-enoyl-CoA + H2O. It catalyses the reaction a (3S)-3-hydroxyacyl-CoA + NAD(+) = a 3-oxoacyl-CoA + NADH + H(+). It carries out the reaction (3S)-3-hydroxybutanoyl-CoA = (3R)-3-hydroxybutanoyl-CoA. It participates in lipid metabolism; fatty acid beta-oxidation. In terms of biological role, catalyzes the formation of a hydroxyacyl-CoA by addition of water on enoyl-CoA. Also exhibits 3-hydroxyacyl-CoA epimerase and 3-hydroxyacyl-CoA dehydrogenase activities. This chain is Fatty acid oxidation complex subunit alpha, found in Yersinia pseudotuberculosis serotype I (strain IP32953).